A 120-amino-acid polypeptide reads, in one-letter code: Piercer of microtubule wall 2 protein (120 aa).

Residues Met-1 to Ser-10 show a composition bias toward basic and acidic residues. Residues Met-1–Pro-25 are disordered.

The protein belongs to the PIERCE2 family. As to quaternary structure, microtubule inner protein component of sperm flagellar doublet microtubules. Interacts with CFAP53, ODAD1 and ODAD3; the interactions link the outer dynein arms docking complex (ODA-DC) to the internal microtubule inner proteins (MIP) in cilium axoneme. Expressed in trachea multiciliated cells.

The protein resides in the cytoplasm. It localises to the cytoskeleton. Its subcellular location is the cilium axoneme. The protein localises to the flagellum axoneme. Microtubule inner protein involved in the attachment of outer dynein arms (ODAs) to dynein-decorated doublet microtubules (DMTs) in cilia axoneme, which is required for motile cilia beating. This chain is Piercer of microtubule wall 2 protein (PIERCE2), found in Bos taurus (Bovine).